The sequence spans 201 residues: NADH-quinone oxidoreductase subunit C (201 aa).

It belongs to the complex I 30 kDa subunit family. In terms of assembly, NDH-1 is composed of 14 different subunits. Subunits NuoB, C, D, E, F, and G constitute the peripheral sector of the complex.

It is found in the cell inner membrane. It carries out the reaction a quinone + NADH + 5 H(+)(in) = a quinol + NAD(+) + 4 H(+)(out). In terms of biological role, NDH-1 shuttles electrons from NADH, via FMN and iron-sulfur (Fe-S) centers, to quinones in the respiratory chain. The immediate electron acceptor for the enzyme in this species is believed to be ubiquinone. Couples the redox reaction to proton translocation (for every two electrons transferred, four hydrogen ions are translocated across the cytoplasmic membrane), and thus conserves the redox energy in a proton gradient. The protein is NADH-quinone oxidoreductase subunit C of Sinorhizobium medicae (strain WSM419) (Ensifer medicae).